A 242-amino-acid chain; its full sequence is Probable transcriptional regulatory protein XCV3282 (242 aa).

Belongs to the TACO1 family.

It localises to the cytoplasm. In Xanthomonas euvesicatoria pv. vesicatoria (strain 85-10) (Xanthomonas campestris pv. vesicatoria), this protein is Probable transcriptional regulatory protein XCV3282.